Reading from the N-terminus, the 270-residue chain is Ribosomal RNA small subunit methyltransferase J (270 aa).

S-adenosyl-L-methionine contacts are provided by residues 126 to 127 (ER) and Asp182.

The protein belongs to the methyltransferase superfamily. RsmJ family.

It is found in the cytoplasm. It carries out the reaction guanosine(1516) in 16S rRNA + S-adenosyl-L-methionine = N(2)-methylguanosine(1516) in 16S rRNA + S-adenosyl-L-homocysteine + H(+). In terms of biological role, specifically methylates the guanosine in position 1516 of 16S rRNA. The polypeptide is Ribosomal RNA small subunit methyltransferase J (Acinetobacter baylyi (strain ATCC 33305 / BD413 / ADP1)).